A 195-amino-acid chain; its full sequence is Putative kinase protein 143R (195 aa).

8-16 (GIIGAGKST) contacts ATP. Glu-31, Tyr-43, and Gln-54 together coordinate substrate. The active-site Proton acceptor is Glu-78. Residues Arg-79 and Glu-142 each contribute to the substrate site.

This sequence belongs to the DCK/DGK family.

The polypeptide is Putative kinase protein 143R (Acheta domesticus (House cricket)).